Here is a 225-residue protein sequence, read N- to C-terminus: GrpE protein homolog 2, mitochondrial (225 aa).

The N-terminal 32 residues, 1-32, are a transit peptide targeting the mitochondrion; sequence MAVRSLWAGRLRVQRLLAWSAAWESKGWPLPF. The residue at position 142 (Lys-142) is an N6-acetyllysine.

It belongs to the GrpE family. In terms of assembly, probable component of the PAM complex at least composed of a mitochondrial HSP70 protein, GRPEL1 or GRPEL2, TIMM44, TIMM16/PAM16 and TIMM14/DNAJC19.

It localises to the mitochondrion matrix. Essential component of the PAM complex, a complex required for the translocation of transit peptide-containing proteins from the inner membrane into the mitochondrial matrix in an ATP-dependent manner. Seems to control the nucleotide-dependent binding of mitochondrial HSP70 to substrate proteins. Stimulates ATPase activity of mt-HSP70. May also serve to modulate the interconversion of oligomeric (inactive) and monomeric (active) forms of mt-HSP70. In Homo sapiens (Human), this protein is GrpE protein homolog 2, mitochondrial (GRPEL2).